Consider the following 1622-residue polypeptide: WD repeat-containing protein 97 (1622 aa).

WD repeat units lie at residues 187 to 233 (SEQG…RRLV), 290 to 329 (LHKT…RMVF), 331 to 370 (GHTG…QVGE), 552 to 592 (ELRC…TVFQ), 594 to 633 (EAHS…EESL), and 687 to 726 (DPTD…LRLL). Disordered stretches follow at residues 1090-1112 (GEKP…EDEE) and 1453-1472 (LHPA…EETD). Residues 1094–1118 (GEEGEEDKKEEEEEKEDEELDWALA) are a coiled coil. Positions 1096–1112 (EGEEDKKEEEEEKEDEE) are enriched in acidic residues.

The polypeptide is WD repeat-containing protein 97 (Homo sapiens (Human)).